The following is a 318-amino-acid chain: Olfactory receptor 10H1 (318 aa).

The Extracellular portion of the chain corresponds to 1–25 (MQRANHSTVTQFILVGFSVFPHLQL). Asparagine 5 carries N-linked (GlcNAc...) asparagine glycosylation. The chain crosses the membrane as a helical span at residues 26–46 (MLFLLFLLMYLFTLLGNLLIM). The Cytoplasmic portion of the chain corresponds to 47 to 54 (ATVWSERS). The helical transmembrane segment at 55–75 (LHTPMYLFLCALSVSEILYTV) threads the bilayer. Topologically, residues 76-99 (AIIPRMLADLLSTQRSIAFLACAS) are extracellular. An intrachain disulfide couples cysteine 97 to cysteine 189. The chain crosses the membrane as a helical span at residues 100–120 (QMFFSFSFGFTHSFLLTVMGY). Over 121 to 139 (DRYVAICHPLRYNVLMSPR) the chain is Cytoplasmic. A helical membrane pass occupies residues 140–160 (GCACLVGCSWAGGLVMGMVVT). Topologically, residues 161–197 (SAIFHLAFCGHKEIHHFACHVPPLLKLACGDDVLVVA) are extracellular. The helical transmembrane segment at 198–218 (KGVGLVCITALLGCFLLILLS) threads the bilayer. The Cytoplasmic portion of the chain corresponds to 219 to 238 (YAFIVAAILKIPSAEGRNKA). A helical membrane pass occupies residues 239–259 (FSTCASHLTVVVVHYGFASVI). The Extracellular portion of the chain corresponds to 260-272 (YLKPKSPQSLEGD). A helical transmembrane segment spans residues 273 to 293 (TLMGITYTVLTPFLSPIIFSL). Residues 294-318 (RNKELKVAMKKTFFSKLYPEKNVMM) lie on the Cytoplasmic side of the membrane.

Belongs to the G-protein coupled receptor 1 family.

Its subcellular location is the cell membrane. Functionally, odorant receptor. This chain is Olfactory receptor 10H1 (OR10H1), found in Homo sapiens (Human).